The primary structure comprises 239 residues: Pyridoxal 5'-phosphate synthase subunit PdxS (239 aa).

Residue D21 participates in D-ribose 5-phosphate binding. K78 acts as the Schiff-base intermediate with D-ribose 5-phosphate in catalysis. G150 contacts D-ribose 5-phosphate. A D-glyceraldehyde 3-phosphate-binding site is contributed by R162. Residues G211 and 232–233 each bind D-ribose 5-phosphate; that span reads GS.

This sequence belongs to the PdxS/SNZ family. In the presence of PdxT, forms a dodecamer of heterodimers.

It catalyses the reaction aldehydo-D-ribose 5-phosphate + D-glyceraldehyde 3-phosphate + L-glutamine = pyridoxal 5'-phosphate + L-glutamate + phosphate + 3 H2O + H(+). It functions in the pathway cofactor biosynthesis; pyridoxal 5'-phosphate biosynthesis. Catalyzes the formation of pyridoxal 5'-phosphate from ribose 5-phosphate (RBP), glyceraldehyde 3-phosphate (G3P) and ammonia. The ammonia is provided by the PdxT subunit. Can also use ribulose 5-phosphate and dihydroxyacetone phosphate as substrates, resulting from enzyme-catalyzed isomerization of RBP and G3P, respectively. The protein is Pyridoxal 5'-phosphate synthase subunit PdxS of Francisella tularensis.